We begin with the raw amino-acid sequence, 776 residues long: Endonuclease MutS2 (776 aa).

330 to 337 (GPNTGGKT) serves as a coordination point for ATP. One can recognise a Smr domain in the interval 701 to 776 (LDLRGMRYEE…GSGATIAILK (76 aa)).

The protein belongs to the DNA mismatch repair MutS family. MutS2 subfamily. As to quaternary structure, homodimer. Binds to stalled ribosomes, contacting rRNA.

Functionally, endonuclease that is involved in the suppression of homologous recombination and thus may have a key role in the control of bacterial genetic diversity. In terms of biological role, acts as a ribosome collision sensor, splitting the ribosome into its 2 subunits. Detects stalled/collided 70S ribosomes which it binds and splits by an ATP-hydrolysis driven conformational change. Acts upstream of the ribosome quality control system (RQC), a ribosome-associated complex that mediates the extraction of incompletely synthesized nascent chains from stalled ribosomes and their subsequent degradation. Probably generates substrates for RQC. This Lactococcus lactis subsp. cremoris (strain SK11) protein is Endonuclease MutS2.